The following is a 234-amino-acid chain: Peroxiredoxin-2E, chloroplastic (234 aa).

A chloroplast-targeting transit peptide spans 1–70 (MATSLSVSRF…TRSFATTPVT (70 aa)). One can recognise a Thioredoxin domain in the interval 73–234 (ISVGDKLPDS…SSAEDMLKAL (162 aa)). Residue Ser-82 is modified to Phosphoserine. Cys-121 acts as the Cysteine sulfenic acid (-SOH) intermediate in catalysis.

Belongs to the peroxiredoxin family. Prx5 subfamily. As to quaternary structure, monomer. As to expression, expressed in all tissues but predominantly in buds, siliques and seeds.

It localises to the plastid. Its subcellular location is the chloroplast stroma. It catalyses the reaction [glutaredoxin]-dithiol + a hydroperoxide = [glutaredoxin]-disulfide + an alcohol + H2O. Thiol-specific peroxidase that catalyzes the reduction of hydrogen peroxide and organic hydroperoxides to water and alcohols, respectively. Plays a role in cell protection against oxidative stress by detoxifying peroxides. May be involved in chloroplast redox homeostasis. The protein is Peroxiredoxin-2E, chloroplastic (PRXIIE) of Arabidopsis thaliana (Mouse-ear cress).